The sequence spans 370 residues: Polyadenylate-binding protein 4-like (370 aa).

4 RRM domains span residues 10–88 (ASLY…WSQR), 98–174 (GNVF…RFKN), 190–267 (TNVY…RAQK), and 293–369 (VKLY…LAQR).

Belongs to the polyadenylate-binding protein type-1 family.

Its function is as follows. May bind RNA. This chain is Polyadenylate-binding protein 4-like (PABPC4L), found in Homo sapiens (Human).